We begin with the raw amino-acid sequence, 115 residues long: Large ribosomal subunit protein uL22 (115 aa).

The protein belongs to the universal ribosomal protein uL22 family. In terms of assembly, part of the 50S ribosomal subunit.

Its function is as follows. This protein binds specifically to 23S rRNA; its binding is stimulated by other ribosomal proteins, e.g. L4, L17, and L20. It is important during the early stages of 50S assembly. It makes multiple contacts with different domains of the 23S rRNA in the assembled 50S subunit and ribosome. Functionally, the globular domain of the protein is located near the polypeptide exit tunnel on the outside of the subunit, while an extended beta-hairpin is found that lines the wall of the exit tunnel in the center of the 70S ribosome. The chain is Large ribosomal subunit protein uL22 from Nitrosospira multiformis (strain ATCC 25196 / NCIMB 11849 / C 71).